Reading from the N-terminus, the 204-residue chain is MADITAADIRKLRELTGAGMSDVKKALVDNDGDVEKAKSWLREKGKAQVAKRAARSAANGLVESYLHRTDPQLPPTLGVLVELRCETDFVAKTDDFKQLARDLAQHIAAADPLYVTADQIPNEVLEAERKIYEAAAREEGKPEQAITKIVEGKVNGYVKSSVLLDQPWVKDGKVTIRALLDQAGASLGEKIEVGRFSRFNIRQA.

An involved in Mg(2+) ion dislocation from EF-Tu region spans residues 87–90 (TDFV).

The protein belongs to the EF-Ts family.

The protein resides in the cytoplasm. Associates with the EF-Tu.GDP complex and induces the exchange of GDP to GTP. It remains bound to the aminoacyl-tRNA.EF-Tu.GTP complex up to the GTP hydrolysis stage on the ribosome. The polypeptide is Elongation factor Ts (Frankia alni (strain DSM 45986 / CECT 9034 / ACN14a)).